We begin with the raw amino-acid sequence, 447 residues long: GTPase Der (447 aa).

EngA-type G domains are found at residues 3–167 and 180–353; these read PVIA…QLPE and IRLA…KAAT. GTP contacts are provided by residues 9–16, 56–60, 119–122, 186–193, 233–237, and 298–301; these read GRPNVGKS, DTGGF, NKAE, DTAGL, and NKWD. Residues 353-438 form the KH-like domain; it reads TCKMPTPVLT…PLRIEMKTSR (86 aa).

This sequence belongs to the TRAFAC class TrmE-Era-EngA-EngB-Septin-like GTPase superfamily. EngA (Der) GTPase family. Associates with the 50S ribosomal subunit.

Its function is as follows. GTPase that plays an essential role in the late steps of ribosome biogenesis. In Paracidovorax citrulli (strain AAC00-1) (Acidovorax citrulli), this protein is GTPase Der.